Here is an 892-residue protein sequence, read N- to C-terminus: Alanine--tRNA ligase (892 aa).

Residues His594, His598, Cys702, and His706 each coordinate Zn(2+).

This sequence belongs to the class-II aminoacyl-tRNA synthetase family. Zn(2+) is required as a cofactor.

Its subcellular location is the cytoplasm. It catalyses the reaction tRNA(Ala) + L-alanine + ATP = L-alanyl-tRNA(Ala) + AMP + diphosphate. Functionally, catalyzes the attachment of alanine to tRNA(Ala) in a two-step reaction: alanine is first activated by ATP to form Ala-AMP and then transferred to the acceptor end of tRNA(Ala). Also edits incorrectly charged Ser-tRNA(Ala) and Gly-tRNA(Ala) via its editing domain. The chain is Alanine--tRNA ligase from Pyrobaculum aerophilum (strain ATCC 51768 / DSM 7523 / JCM 9630 / CIP 104966 / NBRC 100827 / IM2).